The primary structure comprises 532 residues: Autoinducer-2 kinase (532 aa).

The protein belongs to the FGGY kinase family.

Its subcellular location is the cytoplasm. It carries out the reaction (S)-4,5-dihydroxypentane-2,3-dione + ATP = (2S)-2-hydroxy-3,4-dioxopentyl phosphate + ADP + H(+). Functionally, catalyzes the phosphorylation of autoinducer-2 (AI-2) to phospho-AI-2, which subsequently inactivates the transcriptional regulator LsrR and leads to the transcription of the lsr operon. Phosphorylates the ring-open form of (S)-4,5-dihydroxypentane-2,3-dione (DPD), which is the precursor to all AI-2 signaling molecules, at the C5 position. The protein is Autoinducer-2 kinase of Klebsiella pneumoniae subsp. pneumoniae (strain ATCC 700721 / MGH 78578).